The sequence spans 443 residues: Exodeoxyribonuclease 7 large subunit (443 aa).

The protein belongs to the XseA family. Heterooligomer composed of large and small subunits.

It localises to the cytoplasm. The enzyme catalyses Exonucleolytic cleavage in either 5'- to 3'- or 3'- to 5'-direction to yield nucleoside 5'-phosphates.. Bidirectionally degrades single-stranded DNA into large acid-insoluble oligonucleotides, which are then degraded further into small acid-soluble oligonucleotides. The chain is Exodeoxyribonuclease 7 large subunit from Stenotrophomonas maltophilia (strain R551-3).